The primary structure comprises 329 residues: Malate dehydrogenase (329 aa).

11–17 (GAAGQIG) provides a ligand contact to NAD(+). The substrate site is built by Arg92 and Arg98. Residues Asn105, Gln112, and 129–131 (VGN) each bind NAD(+). Asn131 and Arg165 together coordinate substrate. Catalysis depends on His190, which acts as the Proton acceptor.

This sequence belongs to the LDH/MDH superfamily. MDH type 2 family.

The enzyme catalyses (S)-malate + NAD(+) = oxaloacetate + NADH + H(+). In terms of biological role, catalyzes the reversible oxidation of malate to oxaloacetate. In Laribacter hongkongensis (strain HLHK9), this protein is Malate dehydrogenase.